A 365-amino-acid chain; its full sequence is Pre-mRNA-splicing factor srp2 (365 aa).

RRM domains follow at residues 6-69 and 100-166; these read LFVG…RIVV and LIVE…AVTL. Residues 166–365 form a disordered region; it reads LREDPDAANE…SAEGQVAAEW (200 aa). The segment covering 184-194 has biased composition (basic residues); it reads FRSRSPPARRR. 7 positions are modified to phosphoserine: S186, S188, S276, S294, S296, S298, and S308. The segment covering 195 to 307 has biased composition (basic and acidic residues); it reads YRDDYRRGGD…SPRRDREENR (113 aa). A compositionally biased stretch (low complexity) spans 316–332; it reads SYSAAPEASMESSAPTE. The span at 341–353 shows a compositional bias: polar residues; the sequence is EEQQPLQNHSDVG.

The protein belongs to the splicing factor SR family. Post-translationally, extensively phosphorylated on serine residues in the RS domain.

It is found in the nucleus. Functionally, has a role in pre-mRNA splicing where it is involved in spliceosome assembly. The polypeptide is Pre-mRNA-splicing factor srp2 (srp2) (Schizosaccharomyces pombe (strain 972 / ATCC 24843) (Fission yeast)).